A 258-amino-acid polypeptide reads, in one-letter code: Regulatory protein RecX (258 aa).

This sequence belongs to the RecX family.

It localises to the cytoplasm. In terms of biological role, modulates RecA activity. The chain is Regulatory protein RecX from Streptococcus mutans serotype c (strain ATCC 700610 / UA159).